The sequence spans 397 residues: tRNA-specific 2-thiouridylase MnmA (397 aa).

ATP-binding positions include 19–26 (AMSGGVDS) and leucine 45. Cysteine 113 (nucleophile) is an active-site residue. A disulfide bridge connects residues cysteine 113 and cysteine 210. Glycine 137 is a binding site for ATP. Positions 160-162 (RDQ) are interaction with tRNA. Cysteine 210 acts as the Cysteine persulfide intermediate in catalysis.

Belongs to the MnmA/TRMU family.

The protein resides in the cytoplasm. It carries out the reaction S-sulfanyl-L-cysteinyl-[protein] + uridine(34) in tRNA + AH2 + ATP = 2-thiouridine(34) in tRNA + L-cysteinyl-[protein] + A + AMP + diphosphate + H(+). In terms of biological role, catalyzes the 2-thiolation of uridine at the wobble position (U34) of tRNA, leading to the formation of s(2)U34. The protein is tRNA-specific 2-thiouridylase MnmA of Bradyrhizobium sp. (strain BTAi1 / ATCC BAA-1182).